The chain runs to 366 residues: Carbamoyl phosphate synthase small chain (366 aa).

Residues 1–171 (MLEKRYLVLE…KTPYVSTGSD (171 aa)) are CPSase. Residues Ser47, Gly221, and Gly223 each coordinate L-glutamine. One can recognise a Glutamine amidotransferase type-1 domain in the interval 173 to 360 (SVVLLDFGKK…ITMMKDFKEK (188 aa)). The Nucleophile role is filled by Cys248. Residues Leu249, Gln252, Asn290, Gly292, and Tyr293 each contribute to the L-glutamine site. Catalysis depends on residues His333 and Glu335.

The protein belongs to the CarA family. Composed of two chains; the small (or glutamine) chain promotes the hydrolysis of glutamine to ammonia, which is used by the large (or ammonia) chain to synthesize carbamoyl phosphate. Tetramer of heterodimers (alpha,beta)4.

The catalysed reaction is hydrogencarbonate + L-glutamine + 2 ATP + H2O = carbamoyl phosphate + L-glutamate + 2 ADP + phosphate + 2 H(+). It catalyses the reaction L-glutamine + H2O = L-glutamate + NH4(+). It participates in amino-acid biosynthesis; L-arginine biosynthesis; carbamoyl phosphate from bicarbonate: step 1/1. Its pathway is pyrimidine metabolism; UMP biosynthesis via de novo pathway; (S)-dihydroorotate from bicarbonate: step 1/3. Functionally, small subunit of the glutamine-dependent carbamoyl phosphate synthetase (CPSase). CPSase catalyzes the formation of carbamoyl phosphate from the ammonia moiety of glutamine, carbonate, and phosphate donated by ATP, constituting the first step of 2 biosynthetic pathways, one leading to arginine and/or urea and the other to pyrimidine nucleotides. The small subunit (glutamine amidotransferase) binds and cleaves glutamine to supply the large subunit with the substrate ammonia. The polypeptide is Carbamoyl phosphate synthase small chain (Staphylococcus epidermidis (strain ATCC 35984 / DSM 28319 / BCRC 17069 / CCUG 31568 / BM 3577 / RP62A)).